A 244-amino-acid chain; its full sequence is Agamous-like MADS-box protein MADS2 (244 aa).

An MADS-box domain is found at 1–61; it reads MGRGRVELKR…GKLYEFCSSS (61 aa). Residues 88–178 enclose the K-box domain; that stretch reads EQSSYREYLK…TRKLDEISVK (91 aa).

Expressed in flowers and seeds.

It localises to the nucleus. Functionally, probable transcription factor involved in flower development. This Vitis vinifera (Grape) protein is Agamous-like MADS-box protein MADS2.